The chain runs to 231 residues: Orotidine 5'-phosphate decarboxylase (231 aa).

Substrate is bound by residues Asp11, Lys33, 60-69 (DLKFHDIPNT), Thr120, Arg181, Gln190, Gly210, and Arg211. Lys62 functions as the Proton donor in the catalytic mechanism.

The protein belongs to the OMP decarboxylase family. Type 1 subfamily. In terms of assembly, homodimer.

It carries out the reaction orotidine 5'-phosphate + H(+) = UMP + CO2. Its pathway is pyrimidine metabolism; UMP biosynthesis via de novo pathway; UMP from orotate: step 2/2. In terms of biological role, catalyzes the decarboxylation of orotidine 5'-monophosphate (OMP) to uridine 5'-monophosphate (UMP). This is Orotidine 5'-phosphate decarboxylase from Shewanella oneidensis (strain ATCC 700550 / JCM 31522 / CIP 106686 / LMG 19005 / NCIMB 14063 / MR-1).